The chain runs to 521 residues: Outer membrane protein assembly factor BamB (521 aa).

The signal sequence occupies residues 1-19 (MKKLFLVIVPLLLSLLATS). Cys20 is lipidated: N-palmitoyl cysteine. The S-diacylglycerol cysteine moiety is linked to residue Cys20. A disordered region spans residues 418-521 (KSGSIESSPK…IGDFSKGDSD (104 aa)). Residues 429 to 444 (LPDKKVDSNKTSKNDT) are compositionally biased toward basic and acidic residues. Residues 445–477 (DSNPATTATSTKDIQNPANQEMINSTPVSNTST) are compositionally biased toward polar residues.

Belongs to the BamB family. In terms of assembly, part of the Bam complex.

It is found in the cell outer membrane. In terms of biological role, part of the outer membrane protein assembly complex, which is involved in assembly and insertion of beta-barrel proteins into the outer membrane. The polypeptide is Outer membrane protein assembly factor BamB (Francisella salina).